We begin with the raw amino-acid sequence, 376 residues long: Chaperone protein DnaJ (376 aa).

In terms of domain architecture, J spans 4 to 68 (DYYQLLGVAR…ETRARYDQFG (65 aa)). The CR-type zinc-finger motif lies at 135–217 (GGEKEIRVTH…CGGAGRLRRP (83 aa)). Zn(2+) contacts are provided by Cys-148, Cys-151, Cys-165, Cys-168, Cys-191, Cys-194, Cys-205, and Cys-208. CXXCXGXG motif repeat units lie at residues 148-155 (CGTCQGSG), 165-172 (CTTCGGAG), 191-198 (CPTCEGSG), and 205-212 (CDDCGGAG).

It belongs to the DnaJ family. As to quaternary structure, homodimer. Zn(2+) is required as a cofactor.

It localises to the cytoplasm. Functionally, participates actively in the response to hyperosmotic and heat shock by preventing the aggregation of stress-denatured proteins and by disaggregating proteins, also in an autonomous, DnaK-independent fashion. Unfolded proteins bind initially to DnaJ; upon interaction with the DnaJ-bound protein, DnaK hydrolyzes its bound ATP, resulting in the formation of a stable complex. GrpE releases ADP from DnaK; ATP binding to DnaK triggers the release of the substrate protein, thus completing the reaction cycle. Several rounds of ATP-dependent interactions between DnaJ, DnaK and GrpE are required for fully efficient folding. Also involved, together with DnaK and GrpE, in the DNA replication of plasmids through activation of initiation proteins. This is Chaperone protein DnaJ from Synechococcus sp. (strain ATCC 27144 / PCC 6301 / SAUG 1402/1) (Anacystis nidulans).